The following is a 645-amino-acid chain: 1-deoxy-D-xylulose-5-phosphate synthase 1 (645 aa).

Residues His79 and 120–122 (GHS) contribute to the thiamine diphosphate site. A Mg(2+)-binding site is contributed by Asp151. Residues 152–153 (GS), Asn180, Tyr291, and Glu373 each bind thiamine diphosphate. Position 180 (Asn180) interacts with Mg(2+).

This sequence belongs to the transketolase family. DXPS subfamily. Homodimer. The cofactor is Mg(2+). Requires thiamine diphosphate as cofactor.

It catalyses the reaction D-glyceraldehyde 3-phosphate + pyruvate + H(+) = 1-deoxy-D-xylulose 5-phosphate + CO2. It functions in the pathway metabolic intermediate biosynthesis; 1-deoxy-D-xylulose 5-phosphate biosynthesis; 1-deoxy-D-xylulose 5-phosphate from D-glyceraldehyde 3-phosphate and pyruvate: step 1/1. Its function is as follows. Catalyzes the acyloin condensation reaction between C atoms 2 and 3 of pyruvate and glyceraldehyde 3-phosphate to yield 1-deoxy-D-xylulose-5-phosphate (DXP). The polypeptide is 1-deoxy-D-xylulose-5-phosphate synthase 1 (Rhodospirillum rubrum (strain ATCC 11170 / ATH 1.1.1 / DSM 467 / LMG 4362 / NCIMB 8255 / S1)).